The following is a 152-amino-acid chain: MENDQEKPSMVAIQRLDPELPLPVRKHRGDAGADLFSAESVTIEPGHRILVGTGIAIALPIGTVGLIHPRSGRALKEGLSIVNTPGTIDADYRGEIKVCLINLDPTTPIRIERGERIAQLLVQKVELVDFCEVETLSETERGVNGYGSTGVN.

Substrate-binding positions include 70-72 (RSG), N83, 87-89 (TID), and K97.

This sequence belongs to the dUTPase family. Mg(2+) serves as cofactor.

It carries out the reaction dUTP + H2O = dUMP + diphosphate + H(+). Its pathway is pyrimidine metabolism; dUMP biosynthesis; dUMP from dCTP (dUTP route): step 2/2. Functionally, this enzyme is involved in nucleotide metabolism: it produces dUMP, the immediate precursor of thymidine nucleotides and it decreases the intracellular concentration of dUTP so that uracil cannot be incorporated into DNA. This is Deoxyuridine 5'-triphosphate nucleotidohydrolase from Corynebacterium diphtheriae (strain ATCC 700971 / NCTC 13129 / Biotype gravis).